A 492-amino-acid chain; its full sequence is Steroid 21-hydroxylase (492 aa).

Residues R91 and K120 each contribute to the heme b site. Position 231 (R231) interacts with 17alpha-hydroxyprogesterone. R231 provides a ligand contact to progesterone. The heme b site is built by H363, R424, and C426.

This sequence belongs to the cytochrome P450 family. It depends on heme b as a cofactor.

The protein resides in the endoplasmic reticulum membrane. It localises to the microsome membrane. It carries out the reaction 17alpha-hydroxyprogesterone + reduced [NADPH--hemoprotein reductase] + O2 = 11-deoxycortisol + oxidized [NADPH--hemoprotein reductase] + H2O + H(+). It catalyses the reaction progesterone + reduced [NADPH--hemoprotein reductase] + O2 = 21-hydroxyprogesterone + oxidized [NADPH--hemoprotein reductase] + H2O + H(+). Its function is as follows. Specifically catalyzes the 21-hydroxylation of steroids. Required for the adrenal synthesis of mineralocorticoids and glucocorticoids. This is Steroid 21-hydroxylase (CYP21) from Canis lupus familiaris (Dog).